A 382-amino-acid chain; its full sequence is D-galactonate dehydratase (382 aa).

A Mg(2+)-binding site is contributed by Asp183. The Proton donor role is filled by His185. The Mg(2+) site is built by Glu209 and Glu235. His285 (proton acceptor) is an active-site residue.

The protein belongs to the mandelate racemase/muconate lactonizing enzyme family. GalD subfamily. Mg(2+) serves as cofactor.

It catalyses the reaction D-galactonate = 2-dehydro-3-deoxy-D-galactonate + H2O. The protein operates within carbohydrate acid metabolism; D-galactonate degradation; D-glyceraldehyde 3-phosphate and pyruvate from D-galactonate: step 1/3. In terms of biological role, catalyzes the dehydration of D-galactonate to 2-keto-3-deoxy-D-galactonate. This chain is D-galactonate dehydratase, found in Escherichia coli (strain UTI89 / UPEC).